The primary structure comprises 460 residues: UDP-N-acetylmuramate--L-alanine ligase (460 aa).

118–124 (GTHGKTT) lines the ATP pocket.

This sequence belongs to the MurCDEF family.

It localises to the cytoplasm. It carries out the reaction UDP-N-acetyl-alpha-D-muramate + L-alanine + ATP = UDP-N-acetyl-alpha-D-muramoyl-L-alanine + ADP + phosphate + H(+). It functions in the pathway cell wall biogenesis; peptidoglycan biosynthesis. Its function is as follows. Cell wall formation. This is UDP-N-acetylmuramate--L-alanine ligase from Gloeobacter violaceus (strain ATCC 29082 / PCC 7421).